Here is a 717-residue protein sequence, read N- to C-terminus: Mitochondrial potassium channel ATP-binding subunit (717 aa).

The N-terminal 25 residues, 1-25 (MLVHLFRFGIRGGPVPGWSLQSLRF), are a transit peptide targeting the mitochondrion. Helical transmembrane passes span 127–147 (LLALGAAIVLALGAALVNVQI), 178–198 (VQLLLLYGVQGLLTFGYLVLL), 278–298 (LMLAVVTPALMGVGTLMGSGL), and 365–385 (NIAFNCMVLGTLFIGGSLVAG). The 288-residue stretch at 132–419 (AAIVLALGAA…LSVLFGQVVR (288 aa)) folds into the ABC transmembrane type-1 domain. The region spanning 454-691 (ITFQNVTFSY…GGLYSELIRR (238 aa)) is the ABC transporter domain. 489–496 (GQSGGGKT) is a binding site for ATP. Residues 695 to 717 (DASLTSTPPAEKPEDPKSCQSKA) are disordered.

Belongs to the ABC transporter superfamily. ABCB family. Multidrug resistance exporter (TC 3.A.1.201) subfamily. In terms of assembly, the mitochondrial potassium channel (mitoK(ATP)) is composed of 4 subunits of CCDC51/MITOK and 4 subunits of ABCB8/MITOSUR. Interacts with PAAT. Interacts with NRP1; NRP1 regulates ABCB8/MITOSUR protein levels in mitochondria.

It localises to the mitochondrion inner membrane. With respect to regulation, channel activity inhibited by ATP via ABCB8/MITOSUR subunit. In terms of biological role, ATP-binding subunit of the mitochondrial ATP-gated potassium channel (mitoK(ATP)). Together with pore-forming subunit CCDC51/MITOK of the mitoK(ATP) channel, mediates ATP-dependent potassium currents across the mitochondrial inner membrane. An increase in ATP intracellular levels closes the channel, inhibiting K(+) transport, whereas a decrease in ATP levels enhances K(+) uptake in the mitochondrial matrix. Plays a role in mitochondrial iron transport. Required for maintenance of normal cardiac function, possibly by influencing mitochondrial iron export and regulating the maturation of cytosolic iron sulfur cluster-containing enzymes. This is Mitochondrial potassium channel ATP-binding subunit from Mus musculus (Mouse).